The primary structure comprises 483 residues: Fructose-like PTS system EIIBC component (483 aa).

The PTS EIIB type-2 domain occupies 1–105 (MESSLRIVAI…IDQIFSELPT (105 aa)). Cys13 serves as the catalytic Phosphocysteine intermediate; for EIIB activity. Cys13 is modified (phosphocysteine; by EIIA). Residues 128 to 475 (VMSHLMAGVS…LWLRRKAKAA (348 aa)) form the PTS EIIC type-2 domain. The next 10 helical transmembrane spans lie at 132–152 (LMAG…LVAL), 180–200 (IGYL…ASSI), 204–224 (PAFA…LLGT), 227–247 (GAGF…VFWF), 264–284 (LIPF…IGPV), 303–323 (MKFA…GGPI), 344–364 (AIVG…TFIA), 380–400 (IVVG…AAPL), 402–422 (MITA…AFGI), and 442–462 (VGSF…FIIV).

It localises to the cell inner membrane. The enzyme catalyses D-fructose(out) + N(pros)-phospho-L-histidyl-[protein] = D-fructose 1-phosphate(in) + L-histidyl-[protein]. The phosphoenolpyruvate-dependent sugar phosphotransferase system (sugar PTS), a major carbohydrate active transport system, catalyzes the phosphorylation of incoming sugar substrates concomitantly with their translocation across the cell membrane. The enzyme II FrvAB PTS system is involved in fructose transport. In Escherichia coli (strain K12), this protein is Fructose-like PTS system EIIBC component.